Consider the following 540-residue polypeptide: Amino acid transporter AVT1B (540 aa).

The span at 1 to 11 (MNHSTSDQSLY) shows a compositional bias: polar residues. A disordered region spans residues 1 to 55 (MNHSTSDQSLYIESDDGDDERKHLSDDEDDDGTLSDTSDAYNQNQHHLSKASPYS). 11 helical membrane passes run 155-175 (AVLN…PYAV), 180-200 (WLGL…GLLL), 227-247 (ILVS…YIIL), 273-293 (LFAL…DLSV), 297-317 (ISAG…WVGL), 332-352 (LATL…HGVF), 367-387 (AVLL…AVMG), 412-432 (IALW…LSPV), 452-474 (IAIR…FFGL), 478-500 (LIGS…LSIL), and 511-531 (ICIL…YSAL).

The protein belongs to the amino acid/polyamine transporter 2 family. Amino acid/auxin permease (AAAP) (TC 2.A.18.5) subfamily.

The protein resides in the membrane. This Arabidopsis thaliana (Mouse-ear cress) protein is Amino acid transporter AVT1B.